The sequence spans 35 residues: MSDIN-like toxin proprotein 6 (35 aa).

The propeptide occupies 1–10 (MSDINTTRLP). A cross-link (cyclopeptide (Phe-Pro)) is located at residues 11–18 (FVFVASPP). The propeptide occupies 19–35 (CVGDDIAMVLTRGENLC).

It belongs to the MSDIN fungal toxin family. Post-translationally, processed by the macrocyclase-peptidase enzyme POPB to yield a toxic cyclic octapeptide. POPB first removes 10 residues from the N-terminus. Conformational trapping of the remaining peptide forces the enzyme to release this intermediate rather than proceed to macrocyclization. The enzyme rebinds the remaining peptide in a different conformation and catalyzes macrocyclization of the N-terminal 8 residues. As to expression, expressed in basidiocarps.

In terms of biological role, probable toxin that belongs to the MSDIN-like toxin family responsible for a large number of food poisoning cases and deaths. This is MSDIN-like toxin proprotein 6 from Amanita exitialis (Guangzhou destroying angel).